The sequence spans 107 residues: MKWIVIDTVIQPTCGISFSAIWGDMKMIIWYQSTIFLPPGRIFTPVKSGIILKDKEYPITIYNIAPFNKDLWSLLKSSQECPPGESKITNKCLHNSCIIKICPYGLK.

This sequence belongs to the IraM/RssC family.

It is found in the cytoplasm. Functionally, inhibits RpoS proteolysis by regulating RssB activity, thereby increasing the stability of the sigma stress factor RpoS during magnesium starvation. This Escherichia coli O7:K1 (strain IAI39 / ExPEC) protein is Anti-adapter protein IraM.